A 152-amino-acid polypeptide reads, in one-letter code: Ubiquitin-conjugating enzyme E2 B (152 aa).

The UBC core domain maps to 4-150; the sequence is PARRRLMRDF…VSAIVEQSWN (147 aa). Cys-88 (glycyl thioester intermediate) is an active-site residue.

This sequence belongs to the ubiquitin-conjugating enzyme family. As to quaternary structure, interacts with RAD18, UBR2 and WAC.

It is found in the cell membrane. The protein localises to the nucleus. It catalyses the reaction S-ubiquitinyl-[E1 ubiquitin-activating enzyme]-L-cysteine + [E2 ubiquitin-conjugating enzyme]-L-cysteine = [E1 ubiquitin-activating enzyme]-L-cysteine + S-ubiquitinyl-[E2 ubiquitin-conjugating enzyme]-L-cysteine.. The protein operates within protein modification; protein ubiquitination. Functionally, E2 ubiquitin-conjugating enzyme that accepts ubiquitin from the ubiquitin-activating enzyme E1 and transfers it to a E3 ubiquitin-protein ligase. In vitro catalyzes 'Lys-11'-, as well as 'Lys-48'- and 'Lys-63'-linked polyubiquitination. Together with the E3 enzyme BRE1 (RNF20 and/or RNF40), plays a role in transcription regulation by catalyzing the monoubiquitination of histone H2B at 'Lys-120' to form H2BK120ub1. H2BK120ub1 gives a specific tag for epigenetic transcriptional activation, elongation by RNA polymerase II, telomeric silencing, and is also a prerequisite for H3K4me and H3K79me formation. May play a role in DNA repair. Associates to the E3 ligase RAD18 to form the UBE2B-RAD18 ubiquitin ligase complex involved in mono-ubiquitination of DNA-associated PCNA on 'Lys-164'. In association with the E3 enzyme UBR4, is involved in N-end rule-dependent protein degradation. May be involved in neurite outgrowth. This chain is Ubiquitin-conjugating enzyme E2 B (UBE2B), found in Bos taurus (Bovine).